The following is a 100-amino-acid chain: Urease subunit gamma (100 aa).

This sequence belongs to the urease gamma subunit family. As to quaternary structure, heterotrimer of UreA (gamma), UreB (beta) and UreC (alpha) subunits. Three heterotrimers associate to form the active enzyme.

Its subcellular location is the cytoplasm. It catalyses the reaction urea + 2 H2O + H(+) = hydrogencarbonate + 2 NH4(+). It functions in the pathway nitrogen metabolism; urea degradation; CO(2) and NH(3) from urea (urease route): step 1/1. This Marinobacter nauticus (strain ATCC 700491 / DSM 11845 / VT8) (Marinobacter aquaeolei) protein is Urease subunit gamma.